The chain runs to 1091 residues: ATP-citrate synthase (1091 aa).

In terms of domain architecture, ATP-grasp spans 4–265 (KAISEQTGKE…LDAKSGASLK (262 aa)). K58, R66, G67, P109, V111, and E118 together coordinate ATP. At Y131 the chain carries Phosphotyrosine. ATP is bound at residue D216. 3 residues coordinate Mg(2+): D257, S260, and A262. S263 is modified (phosphoserine). The citrate site is built by G309, N346, T348, Y364, and R379. The segment covering 442–457 (SGSTSTPAPSRTASFS) has biased composition (low complexity). The segment at 442–471 (SGSTSTPAPSRTASFSESRTDEVAPAKKAK) is disordered. T447 carries the post-translational modification Phosphothreonine. The residue at position 451 (S451) is a Phosphoserine. S455 is modified (phosphoserine; by PKA and PKB/AKT1 or PKB/AKT2 or BCKDK). The residue at position 459 (S459) is a Phosphoserine. 3 positions are modified to N6-acetyllysine; alternate: K530, K536, and K544. Glycyl lysine isopeptide (Lys-Gly) (interchain with G-Cter in ubiquitin); alternate cross-links involve residues K530, K536, and K544. Phosphothreonine is present on T629. S653 is subject to Phosphoserine. Residue Y672 is modified to Phosphotyrosine. The active-site Tele-phosphohistidine intermediate is H750. 769 to 779 (LKEAGVFVPRS) provides a ligand contact to CoA. S829 carries the phosphoserine modification. N6-acetyllysine is present on residues K938, K958, K968, and K1067. S1090 carries the post-translational modification Phosphoserine.

This sequence in the N-terminal section; belongs to the succinate/malate CoA ligase beta subunit family. It in the C-terminal section; belongs to the succinate/malate CoA ligase alpha subunit family. Homotetramer. Mg(2+) is required as a cofactor. In terms of processing, phosphorylated by PKA and GSK3 in a sequential manner; phosphorylation results in activation of its activity. Phosphorylation on Thr-447 and Ser-451 depends on the phosphorylation state of Ser-455. Phosphorylation on Ser-455 is decreased by prior phosphorylation on the other 2 residues. Phosphorylated at Ser-455 by BCKDK and dephosphorylated by protein phosphatase PPM1K. Post-translationally, ISGylated. Acetylated at Lys-530, Lys-536 and Lys-544 by KAT2B/PCAF. Acetylation is promoted by glucose and stabilizes the protein, probably by preventing ubiquitination at the same sites. Acetylation promotes de novo lipid synthesis. Deacetylated by SIRT2. In terms of processing, ubiquitinated at Lys-530, Lys-536 and Lys-544 by the BCR(KLHL25) E3 ubiquitin ligase complex and UBR4, leading to its degradation. Ubiquitination is probably inhibited by acetylation at same site. BCR(KLHL25)-mediated degradation of ACLY promotes fatty acid oxidation and is required for differentiation of inducible regulatory T (iTreg) cells.

The protein resides in the cytoplasm. It localises to the cytosol. The enzyme catalyses oxaloacetate + acetyl-CoA + ADP + phosphate = citrate + ATP + CoA. Its activity is regulated as follows. Phosphorylation results in activation of its activity. Glucose 6-phosphate, fructose 6-phosphate, fructose 2,6-bisphosphate, ribulose 5-phosphate, and fructose 1,6-bisphosphate also act as activators. In terms of biological role, catalyzes the cleavage of citrate into oxaloacetate and acetyl-CoA, the latter serving as common substrate in multiple biochemical reactions in protein, carbohydrate and lipid metabolism. This is ATP-citrate synthase (ACLY) from Bos taurus (Bovine).